We begin with the raw amino-acid sequence, 136 residues long: Holo-[acyl-carrier-protein] synthase (136 aa).

Residues aspartate 8 and glutamate 58 each coordinate Mg(2+).

This sequence belongs to the P-Pant transferase superfamily. AcpS family. Mg(2+) serves as cofactor.

The protein resides in the cytoplasm. It catalyses the reaction apo-[ACP] + CoA = holo-[ACP] + adenosine 3',5'-bisphosphate + H(+). Functionally, transfers the 4'-phosphopantetheine moiety from coenzyme A to a Ser of acyl-carrier-protein. In Leuconostoc mesenteroides subsp. mesenteroides (strain ATCC 8293 / DSM 20343 / BCRC 11652 / CCM 1803 / JCM 6124 / NCDO 523 / NBRC 100496 / NCIMB 8023 / NCTC 12954 / NRRL B-1118 / 37Y), this protein is Holo-[acyl-carrier-protein] synthase.